We begin with the raw amino-acid sequence, 158 residues long: Transcription elongation factor GreA (158 aa).

Residues 47 to 74 adopt a coiled-coil conformation; that stretch reads AEYHAAKEEQSHNEGRIAELEDKLARAD.

Belongs to the GreA/GreB family.

Its function is as follows. Necessary for efficient RNA polymerase transcription elongation past template-encoded arresting sites. The arresting sites in DNA have the property of trapping a certain fraction of elongating RNA polymerases that pass through, resulting in locked ternary complexes. Cleavage of the nascent transcript by cleavage factors such as GreA or GreB allows the resumption of elongation from the new 3'terminus. GreA releases sequences of 2 to 3 nucleotides. This is Transcription elongation factor GreA from Bradyrhizobium sp. (strain BTAi1 / ATCC BAA-1182).